Here is a 452-residue protein sequence, read N- to C-terminus: UDP-N-acetylmuramoyl-L-alanine--L-glutamate ligase (452 aa).

118-124 (GSKGKST) provides a ligand contact to ATP.

The protein belongs to the MurCDEF family. MurD2 subfamily.

It localises to the cytoplasm. It catalyses the reaction UDP-N-acetyl-alpha-D-muramoyl-L-alanine + L-glutamate + ATP = UDP-N-acetyl-alpha-D-muramoyl-L-alanyl-L-glutamate + ADP + phosphate + H(+). It participates in cell wall biogenesis; peptidoglycan biosynthesis. Functionally, cell wall formation. Catalyzes the addition of L-glutamate to the nucleotide precursor UDP-N-acetylmuramoyl-L-alanine. The polypeptide is UDP-N-acetylmuramoyl-L-alanine--L-glutamate ligase (Micromonospora sp. (strain ATCC 39149 / NRRL 15099 / SCC 1413)).